The following is a 67-amino-acid chain: UPF0337 protein BCE_3655 (67 aa).

The protein belongs to the UPF0337 (CsbD) family.

The chain is UPF0337 protein BCE_3655 from Bacillus cereus (strain ATCC 10987 / NRS 248).